The primary structure comprises 617 residues: Chaperone protein HscA homolog (617 aa).

The protein belongs to the heat shock protein 70 family.

Functionally, probable chaperone. Has a low intrinsic ATPase activity which is markedly stimulated by HscB. The polypeptide is Chaperone protein HscA homolog (Vibrio vulnificus (strain CMCP6)).